The chain runs to 657 residues: Forkhead box protein O3 (657 aa).

Disordered regions lie at residues 1–71 and 216–320; these read MAEA…EGAA and SSWW…ELDD. Positions 142 to 236 form a DNA-binding region, fork-head; that stretch reads WGNMSYADLI…KGGKAPRRRA (95 aa). Basic residues predominate over residues 246 to 257; that stretch reads TKSRGRAAKKKA. The span at 268-283 shows a compositional bias: polar residues; sequence DSPSQLSKWPGSPTSR. Residues 284-296 show a composition bias toward basic and acidic residues; it reads SSDKLDTWTDFRS. The span at 297–307 shows a compositional bias: polar residues; it reads RTNSNASTISG.

Dephosphorylation may promote translocation to the nucleus where the protein induces transcription of target genes and triggers apoptosis. As to expression, localized to the animal hemisphere during early cleavage stages. At the late neurula, localized in the anterior neural plate, neural crest cells and in the hatching gland. As development progresses, expression becomes less localized, being observed in a variety of organs and tissues including the head, branchial arches and somites by stage 32.

Its subcellular location is the cytoplasm. It is found in the cytosol. The protein resides in the nucleus. Functionally, transcriptional activator that recognizes and binds to the DNA sequence 5'-[AG]TAAA[TC]A-3' and regulates different processes, such as apoptosis and autophagy. Acts as a positive regulator of autophagy in skeletal muscle: in starved cells, enters the nucleus following dephosphorylation and binds the promoters of autophagy genes, thereby activating their expression, resulting in proteolysis of skeletal muscle proteins. Triggers apoptosis in the absence of survival factors, including neuronal cell death upon oxidative stress. In response to metabolic stress, translocates into the mitochondria where it promotes mtDNA transcription. Also acts as a key regulator of chondrogenic commitment of skeletal progenitor cells in response to lipid availability: when lipids levels are low, translocates to the nucleus and promotes expression of sox9, which induces chondrogenic commitment and suppresses fatty acid oxidation. Also acts as a key regulator of regulatory T-cells (Treg) differentiation. The polypeptide is Forkhead box protein O3 (Xenopus laevis (African clawed frog)).